The sequence spans 145 residues: DNA polymerase epsilon subunit 3 (145 aa).

Residue alanine 2 is modified to N-acetylalanine. Threonine 83 is modified (phosphothreonine). Residues 85–144 (LKEALEAYRREQKGKKEASEQKKKDKDKKDCEEQDKSREEEDEDEERLDEEEQNEEEEVD) adopt a coiled-coil conformation. The segment covering 93–123 (RREQKGKKEASEQKKKDKDKKDCEEQDKSRE) has biased composition (basic and acidic residues). The interval 93–145 (RREQKGKKEASEQKKKDKDKKDCEEQDKSREEEDEDEERLDEEEQNEEEEVDN) is disordered. Serine 121 carries the post-translational modification Phosphoserine. Over residues 124–145 (EEDEDEERLDEEEQNEEEEVDN) the composition is skewed to acidic residues.

As to quaternary structure, component of the DNA polymerase epsilon complex consisting of four subunits: the catalytic subunit POLE and the accessory subunits POLE2, POLE3 and POLE4. Interaction with POLE4 is a prerequisite for further binding with POLE and POLE2. Heterodimer with CHRAC1; binds to DNA. Component of the CHRAC ISWI chromatin remodeling complex at least composed of SMARCA5/SNF2H, BAZ1A/ACF1, CHRAC1 and POLE3; the complex preferentially binds DNA through the CHRAC1-POLE3 heterodimer and possesses ATP-dependent nucleosome-remodeling activity. Within the complex, the heterodimer with CHRAC1 interacts with SMARCA5/SNF2H; the interaction is direct and enhances nucleosome sliding activity by the SMARCA5/SNF2H and BAZ1A/ACF1 interaction. Within the complex, the heterodimer with CHRAC1 interacts with BAZ1A/ACF1; the interactions are direct.

The protein resides in the nucleus. Its function is as follows. Accessory component of the DNA polymerase epsilon complex. Participates in DNA repair and in chromosomal DNA replication. Forms a complex with CHRAC1 and binds naked DNA, which is then incorporated into chromatin, aided by the nucleosome-remodeling activity of ISWI/SNF2H and ACF1. Does not enhance nucleosome sliding activity of the ACF-5 ISWI chromatin remodeling complex. The polypeptide is DNA polymerase epsilon subunit 3 (Pole3) (Rattus norvegicus (Rat)).